We begin with the raw amino-acid sequence, 259 residues long: UPF0246 protein PBPRA0561 (259 aa).

It belongs to the UPF0246 family.

This chain is UPF0246 protein PBPRA0561, found in Photobacterium profundum (strain SS9).